We begin with the raw amino-acid sequence, 337 residues long: Inositol 2-dehydrogenase (337 aa).

It belongs to the Gfo/Idh/MocA family. As to quaternary structure, homotetramer.

The enzyme catalyses myo-inositol + NAD(+) = scyllo-inosose + NADH + H(+). In terms of biological role, involved in the oxidation of myo-inositol (MI) to 2-keto-myo-inositol (2KMI or 2-inosose). The protein is Inositol 2-dehydrogenase of Burkholderia vietnamiensis (strain G4 / LMG 22486) (Burkholderia cepacia (strain R1808)).